The sequence spans 70 residues: Large ribosomal subunit protein bL33m (70 aa).

The protein belongs to the bacterial ribosomal protein bL33 family. In terms of assembly, component of the mitochondrial large ribosomal subunit (mt-LSU). Mature yeast 74S mitochondrial ribosomes consist of a small (37S) and a large (54S) subunit. The 37S small subunit contains a 15S ribosomal RNA (15S mt-rRNA) and 34 different proteins. The 54S large subunit contains a 21S rRNA (21S mt-rRNA) and 46 different proteins. bL33m stabilizes the tRNA acceptor stem in the E-site.

Its subcellular location is the mitochondrion. Functionally, component of the mitochondrial ribosome (mitoribosome), a dedicated translation machinery responsible for the synthesis of mitochondrial genome-encoded proteins, including at least some of the essential transmembrane subunits of the mitochondrial respiratory chain. The mitoribosomes are attached to the mitochondrial inner membrane and translation products are cotranslationally integrated into the membrane. The protein is Large ribosomal subunit protein bL33m (MRPL39) of Saccharomyces cerevisiae (strain ATCC 204508 / S288c) (Baker's yeast).